Consider the following 329-residue polypeptide: Malate dehydrogenase (329 aa).

12–18 lines the NAD(+) pocket; the sequence is GAAGQIG. Substrate contacts are provided by Arg93 and Arg99. NAD(+) contacts are provided by residues Asn106, Gln113, and 130–132; that span reads TGN. Substrate is bound by residues Asn132 and Arg163. The Proton acceptor role is filled by His188.

This sequence belongs to the LDH/MDH superfamily. MDH type 2 family.

It carries out the reaction (S)-malate + NAD(+) = oxaloacetate + NADH + H(+). In terms of biological role, catalyzes the reversible oxidation of malate to oxaloacetate. The sequence is that of Malate dehydrogenase from Mycolicibacterium paratuberculosis (strain ATCC BAA-968 / K-10) (Mycobacterium paratuberculosis).